The chain runs to 1092 residues: Isoleucine--tRNA ligase (1092 aa).

The 'HIGH' region signature appears at 53–63; it reads PFANGLPHYGH. A 'KMSKS' region motif is present at residues 613 to 617; that stretch reads KLSKR. Residue lysine 616 participates in ATP binding.

The protein belongs to the class-I aminoacyl-tRNA synthetase family. IleS type 2 subfamily. As to quaternary structure, monomer. Zn(2+) is required as a cofactor.

It is found in the cytoplasm. It carries out the reaction tRNA(Ile) + L-isoleucine + ATP = L-isoleucyl-tRNA(Ile) + AMP + diphosphate. Catalyzes the attachment of isoleucine to tRNA(Ile). As IleRS can inadvertently accommodate and process structurally similar amino acids such as valine, to avoid such errors it has two additional distinct tRNA(Ile)-dependent editing activities. One activity is designated as 'pretransfer' editing and involves the hydrolysis of activated Val-AMP. The other activity is designated 'posttransfer' editing and involves deacylation of mischarged Val-tRNA(Ile). This Rickettsia africae (strain ESF-5) protein is Isoleucine--tRNA ligase.